We begin with the raw amino-acid sequence, 320 residues long: Aspartate carbamoyltransferase catalytic subunit (320 aa).

Arginine 70 and threonine 71 together coordinate carbamoyl phosphate. Residue lysine 98 participates in L-aspartate binding. Carbamoyl phosphate is bound by residues arginine 120, histidine 150, and glutamine 153. 2 residues coordinate L-aspartate: arginine 184 and arginine 239. Positions 280 and 281 each coordinate carbamoyl phosphate.

The protein belongs to the aspartate/ornithine carbamoyltransferase superfamily. ATCase family. In terms of assembly, heterododecamer (2C3:3R2) of six catalytic PyrB chains organized as two trimers (C3), and six regulatory PyrI chains organized as three dimers (R2).

It carries out the reaction carbamoyl phosphate + L-aspartate = N-carbamoyl-L-aspartate + phosphate + H(+). It functions in the pathway pyrimidine metabolism; UMP biosynthesis via de novo pathway; (S)-dihydroorotate from bicarbonate: step 2/3. Its function is as follows. Catalyzes the condensation of carbamoyl phosphate and aspartate to form carbamoyl aspartate and inorganic phosphate, the committed step in the de novo pyrimidine nucleotide biosynthesis pathway. The polypeptide is Aspartate carbamoyltransferase catalytic subunit (Xylella fastidiosa (strain Temecula1 / ATCC 700964)).